Here is a 562-residue protein sequence, read N- to C-terminus: Protoporphyrinogen oxidase 1, chloroplastic (562 aa).

A chloroplast-targeting transit peptide spans 1–48; the sequence is MSAMALSSTMALSLPQSSMSLSHCRHNRITILIPSSSLRRRGGSSIRC. Residues 88 to 93, 115 to 116, and 137 to 140 contribute to the FAD site; these read GGGISG, EA, and GPNS. The disordered stretch occupies residues 274 to 302; the sequence is TLKTIQERKDNPKPPRDPRLPKPKGQTVG. Residues 278-293 show a composition bias toward basic and acidic residues; the sequence is IQERKDNPKPPRDPRL. Residues Val323 and 536–538 each bind FAD; that span reads VAL.

Belongs to the protoporphyrinogen/coproporphyrinogen oxidase family. Protoporphyrinogen oxidase subfamily. FAD is required as a cofactor.

It is found in the plastid. Its subcellular location is the chloroplast thylakoid membrane. It localises to the chloroplast inner membrane. The catalysed reaction is protoporphyrinogen IX + 3 O2 = protoporphyrin IX + 3 H2O2. It functions in the pathway porphyrin-containing compound metabolism; protoporphyrin-IX biosynthesis; protoporphyrin-IX from protoporphyrinogen-IX: step 1/1. The protein operates within porphyrin-containing compound metabolism; chlorophyll biosynthesis. In terms of biological role, catalyzes the 6-electron oxidation of protoporphyrinogen-IX to form protoporphyrin-IX. This Spinacia oleracea (Spinach) protein is Protoporphyrinogen oxidase 1, chloroplastic.